Consider the following 235-residue polypeptide: DNA repair protein RecO (235 aa).

Belongs to the RecO family.

Involved in DNA repair and RecF pathway recombination. The sequence is that of DNA repair protein RecO from Enterobacter sp. (strain 638).